We begin with the raw amino-acid sequence, 336 residues long: UDP-N-acetylglucosamine--N-acetylmuramyl-(pentapeptide) pyrophosphoryl-undecaprenol N-acetylglucosamine transferase (336 aa).

The UDP-N-acetyl-alpha-D-glucosamine site is built by Asn-102, Arg-144, Ser-172, and Gln-264.

The protein belongs to the glycosyltransferase 28 family. MurG subfamily.

Its subcellular location is the cell membrane. The catalysed reaction is di-trans,octa-cis-undecaprenyl diphospho-N-acetyl-alpha-D-muramoyl-L-alanyl-D-glutamyl-meso-2,6-diaminopimeloyl-D-alanyl-D-alanine + UDP-N-acetyl-alpha-D-glucosamine = di-trans,octa-cis-undecaprenyl diphospho-[N-acetyl-alpha-D-glucosaminyl-(1-&gt;4)]-N-acetyl-alpha-D-muramoyl-L-alanyl-D-glutamyl-meso-2,6-diaminopimeloyl-D-alanyl-D-alanine + UDP + H(+). It participates in cell wall biogenesis; peptidoglycan biosynthesis. Cell wall formation. Catalyzes the transfer of a GlcNAc subunit on undecaprenyl-pyrophosphoryl-MurNAc-pentapeptide (lipid intermediate I) to form undecaprenyl-pyrophosphoryl-MurNAc-(pentapeptide)GlcNAc (lipid intermediate II). The polypeptide is UDP-N-acetylglucosamine--N-acetylmuramyl-(pentapeptide) pyrophosphoryl-undecaprenol N-acetylglucosamine transferase (Rubrobacter xylanophilus (strain DSM 9941 / JCM 11954 / NBRC 16129 / PRD-1)).